Reading from the N-terminus, the 296-residue chain is NADH-ubiquinone oxidoreductase chain 2 (296 aa).

The next 8 helical transmembrane spans lie at 5-25 (LCLFFSYILMVSSHSWLGLWL), 49-69 (YFLIQSVASVIFLASILNQSF), 71-91 (FLIPFALLIKIGAAPFHMWLV), 114-134 (LLGLAMLQFTNSFFIFISAFI), 167-187 (FFLMLVYYVTYLAILYFAVIL), 209-229 (ASISFNLLSLAGLPPFLGFFI), 242-262 (LLVLALVVSSCFSVYFYFSIA), and 276-296 (KMEIPGILSMGFNIFLPLFFL).

The protein belongs to the complex I subunit 2 family.

It localises to the mitochondrion inner membrane. It catalyses the reaction a ubiquinone + NADH + 5 H(+)(in) = a ubiquinol + NAD(+) + 4 H(+)(out). Core subunit of the mitochondrial membrane respiratory chain NADH dehydrogenase (Complex I) that is believed to belong to the minimal assembly required for catalysis. Complex I functions in the transfer of electrons from NADH to the respiratory chain. The immediate electron acceptor for the enzyme is believed to be ubiquinone. The chain is NADH-ubiquinone oxidoreductase chain 2 (ND2) from Artemia franciscana (Brine shrimp).